We begin with the raw amino-acid sequence, 309 residues long: MAPSHWRVILNGKSTDNMDLREAVGTLRKRGIQLDVRVTWEDGDAERYVGEAVADGVHTVVAAGGDGTLSEVAAALAHHEGDAASLPSLGLVPLGTANDFATAANLPIAPLEALTLIAERVAQPVDLLRIDADHGPHWCANVASGGFGTQVTVETDEGLKKMLGGLAYLITGMSRLGRIDPISARFSGPEFSWEGEFIALGLGNGRQAGGGQALCPEALIDDGLLDVTIVPDLDGEVAATLGTLVIGGKQAALERVAVRARVPWLEIVSQQPLTLNLDGEPETSRHFRIECVPARLRMHLPGECPLLGG.

Residues 1-134 enclose the DAGKc domain; sequence MAPSHWRVIL…VDLLRIDADH (134 aa). ATP is bound by residues Thr-39, 65–71, and Thr-96; that span reads GDGTLSE. The Mg(2+) site is built by Leu-219, Asp-222, and Leu-224. Glu-280 acts as the Proton acceptor in catalysis.

This sequence belongs to the diacylglycerol/lipid kinase family. YegS lipid kinase subfamily. The cofactor is Mg(2+). Requires Ca(2+) as cofactor.

It is found in the cytoplasm. Its function is as follows. Probably phosphorylates lipids; the in vivo substrate is unknown. This is Probable lipid kinase YegS-like from Xanthomonas euvesicatoria pv. vesicatoria (strain 85-10) (Xanthomonas campestris pv. vesicatoria).